Consider the following 118-residue polypeptide: Large ribosomal subunit protein uL24 (118 aa).

The protein belongs to the universal ribosomal protein uL24 family. Part of the 50S ribosomal subunit.

Its function is as follows. One of two assembly initiator proteins, it binds directly to the 5'-end of the 23S rRNA, where it nucleates assembly of the 50S subunit. Functionally, one of the proteins that surrounds the polypeptide exit tunnel on the outside of the subunit. This chain is Large ribosomal subunit protein uL24, found in Prochlorococcus marinus (strain MIT 9215).